Reading from the N-terminus, the 513-residue chain is GMP synthase [glutamine-hydrolyzing] (513 aa).

Positions methionine 8 to glutamate 198 constitute a Glutamine amidotransferase type-1 domain. The active-site Nucleophile is cysteine 85. Catalysis depends on residues histidine 172 and glutamate 174. Positions tryptophan 199–arginine 388 constitute a GMPS ATP-PPase domain. Residue glycine 227–valine 233 participates in ATP binding.

In terms of assembly, homodimer.

The catalysed reaction is XMP + L-glutamine + ATP + H2O = GMP + L-glutamate + AMP + diphosphate + 2 H(+). Its pathway is purine metabolism; GMP biosynthesis; GMP from XMP (L-Gln route): step 1/1. Functionally, catalyzes the synthesis of GMP from XMP. The chain is GMP synthase [glutamine-hydrolyzing] (guaA) from Bacillus subtilis (strain 168).